The chain runs to 241 residues: Small ribosomal subunit protein bS6 (241 aa).

Positions 97-108 (KPKIRERNRKYT) are enriched in basic residues. Residues 97–241 (KPKIRERNRK…YNNKKPQSSN (145 aa)) are disordered. Over residues 109–118 (PRRDRFEKPN) the composition is skewed to basic and acidic residues. Low complexity-rich tracts occupy residues 130–151 (QDQQ…QTSQ) and 161–182 (DDFQ…NQSG). Residues 189–202 (RQNQENIHQNSKNH) show a composition bias toward polar residues.

The protein belongs to the bacterial ribosomal protein bS6 family.

Binds together with bS18 to 16S ribosomal RNA. The protein is Small ribosomal subunit protein bS6 of Mesomycoplasma hyopneumoniae (strain 232) (Mycoplasma hyopneumoniae).